The primary structure comprises 565 residues: Amino-acid acetyltransferase, mitochondrial (565 aa).

Residues 38 to 58 (DIATATPAATPSDGAQPPAQN) are disordered. In terms of domain architecture, N-acetyltransferase spans 352-540 (LPVRVLRSME…EFGGGRLVRV (189 aa)).

It belongs to the acetyltransferase family.

It localises to the mitochondrion. It carries out the reaction L-glutamate + acetyl-CoA = N-acetyl-L-glutamate + CoA + H(+). The protein operates within amino-acid biosynthesis; L-arginine biosynthesis; N(2)-acetyl-L-ornithine from L-glutamate: step 1/4. N-acetylglutamate synthase involved in arginine biosynthesis. This is Amino-acid acetyltransferase, mitochondrial (ARG2) from Cryptococcus neoformans var. neoformans serotype D (strain B-3501A) (Filobasidiella neoformans).